The primary structure comprises 917 residues: Hexokinase-1 (917 aa).

M1 bears the N-acetylmethionine mark. Residues 1–10 (MIAAQLLAYY) are mitochondrial-binding peptide (MBP). Hexokinase domains lie at 16–458 (DDQV…MVTA) and 464–906 (AEQH…LITA). ATP contacts are provided by residues R30 and 84–89 (DLGGSS). Residues 73 to 207 (DGSEKGDFIA…DYDANIVAVV (135 aa)) form a hexokinase small subdomain 1 region. 84–91 (DLGGSSFR) serves as a coordination point for D-glucose 6-phosphate. D-glucose is bound by residues S155, 172–173 (TK), and 208–209 (ND). Residues 208-447 (NDTVGTMMTC…SDVRFLLSES (240 aa)) are hexokinase large subdomain 1. D-glucose 6-phosphate-binding residues include D209 and T232. Residues N235, E260, and 291 to 294 (QLFE) each bind D-glucose. S337 bears the Phosphoserine mark. ATP is bound at residue N345. A D-glucose 6-phosphate-binding site is contributed by 413 to 415 (DGS). 425 to 426 (RR) serves as a coordination point for ATP. D-glucose 6-phosphate contacts are provided by residues S449 and 532 to 536 (DLGGT). The tract at residues 521–655 (DGTENGDFLA…EFDLDVVAVV (135 aa)) is hexokinase small subdomain 2. 532-537 (DLGGTN) serves as a coordination point for ATP. Residues 603–604 (SF), 620–621 (TK), and 656–657 (ND) contribute to the D-glucose site. The interval 656–895 (NDTVGTMMTC…CNVSFLLSED (240 aa)) is hexokinase large subdomain 2. D-glucose 6-phosphate-binding residues include D657 and T680. Position 680 (T680) interacts with ATP. Residues 682–683 (SN), E708, and E742 each bind D-glucose. ATP contacts are provided by residues 747 to 748 (GM), 784 to 788 (TKFLS), and 863 to 867 (TLYKL). D-glucose 6-phosphate is bound by residues 861-863 (DGT) and S897.

The protein belongs to the hexokinase family. Monomer. Interacts with RABL2/RABL2A; binds preferentially to GTP-bound RABL2. Interacts with VDAC1. The HK1-VDAC1 complex interacts with ATF2. Interacts (via N-terminal spermatogenic cell-specific region) with PFKM (via C-terminus). Interacts with SMAD5.

It is found in the mitochondrion outer membrane. The protein resides in the cytoplasm. Its subcellular location is the cytosol. The catalysed reaction is a D-hexose + ATP = a D-hexose 6-phosphate + ADP + H(+). The enzyme catalyses D-fructose + ATP = D-fructose 6-phosphate + ADP + H(+). It catalyses the reaction D-glucose + ATP = D-glucose 6-phosphate + ADP + H(+). It carries out the reaction D-mannose + ATP = D-mannose 6-phosphate + ADP + H(+). The catalysed reaction is D-glucosamine + ATP = D-glucosamine 6-phosphate + ADP + H(+). Its pathway is carbohydrate metabolism; hexose metabolism. It participates in carbohydrate degradation; glycolysis; D-glyceraldehyde 3-phosphate and glycerone phosphate from D-glucose: step 1/4. With respect to regulation, hexokinase is an allosteric enzyme inhibited by its product D-glucose 6-phosphate. Hexokinase activity is inhibited by N-acetyl-D-glucosamine. Its function is as follows. Catalyzes the phosphorylation of various hexoses, such as D-glucose, D-glucosamine, D-fructose, D-mannose and 2-deoxy-D-glucose, to hexose 6-phosphate (D-glucose 6-phosphate, D-glucosamine 6-phosphate, D-fructose 6-phosphate, D-mannose 6-phosphate and 2-deoxy-D-glucose 6-phosphate, respectively). Does not phosphorylate N-acetyl-D-glucosamine. Mediates the initial step of glycolysis by catalyzing phosphorylation of D-glucose to D-glucose 6-phosphate. Involved in innate immunity and inflammation by acting as a pattern recognition receptor for bacterial peptidoglycan. When released in the cytosol, N-acetyl-D-glucosamine component of bacterial peptidoglycan inhibits the hexokinase activity of HK1 and causes its dissociation from mitochondrial outer membrane, thereby activating the NLRP3 inflammasome. This chain is Hexokinase-1, found in Pongo abelii (Sumatran orangutan).